The chain runs to 1186 residues: Probable inactive serine/threonine-protein kinase DDB_G0293184 (1186 aa).

A compositionally biased stretch (acidic residues) spans 1-12; the sequence is MEQEDQQYEEDS. Disordered stretches follow at residues 1 to 55 and 99 to 122; these read MEQE…NNDS and MEQQ…NTNF. 2 stretches are compositionally biased toward low complexity: residues 34 to 48 and 99 to 110; these read TTTE…TTPT and MEQQQQQQHLQP. Positions 173–437 constitute a Protein kinase domain; it reads YESPPTLGKY…VHDLLRHPWL (265 aa). ATP is bound by residues 179 to 187 and K205; that span reads LGKYDKVIL. Disordered stretches follow at residues 447 to 468 and 530 to 551; these read SSSS…GNVN and YNNY…NECG. Over residues 453–468 the composition is skewed to polar residues; it reads QAHPTVQSNNLNGNVN. Positions 530 to 545 are enriched in low complexity; that stretch reads YNNYNNNNNNNNNTND. The stretch at 631-659 forms a coiled coil; sequence LKRTNQMANDLGRKYEILQSNIKRLEDYL. Over residues 766-784 the composition is skewed to polar residues; sequence NNLDPSNNNESVNLSTSPG. Disordered stretches follow at residues 766–911 and 959–988; these read NNLD…NGNN and ENKK…GDVS. The span at 785–836 shows a compositional bias: low complexity; sequence SLVNSNSNPSISNSLNNNNNNNNNNNNNNNGNPNVIITTNNNCNSNSNGNNI. A compositionally biased stretch (basic and acidic residues) spans 847–896; that stretch reads KEVKEGKEIKEIKEPKEKDKDKEKDKDKEKDKDKEKDKDKEKEKDKDKEN. A coiled-coil region spans residues 875 to 909; that stretch reads EKDKDKEKDKDKEKEKDKDKENNNNNNSNNNNNNG. The span at 897–911 shows a compositional bias: low complexity; sequence NNNNNSNNNNNNGNN. Polar residues predominate over residues 969–978; sequence LDSTNKQSPG. One can recognise a Rho-GAP domain in the interval 1004–1186; the sequence is VRLDDLMTRE…LSFPKFNLSV (183 aa).

The protein belongs to the protein kinase superfamily. STE Ser/Thr protein kinase family.

The sequence is that of Probable inactive serine/threonine-protein kinase DDB_G0293184 from Dictyostelium discoideum (Social amoeba).